Reading from the N-terminus, the 150-residue chain is MRPGSTPPSRRKSRPPRRVSPPLPTTSRTSPRRPHAQQQRRASRASPKKRFRPGTRALMEIRKYQKSTELLIRKAPFSRLVREVCMTYACGMNYNWQSMALMALQEASEAFLVRLFEDSYLCSLHAKRVTLYVQDIQLARRIRGVNEGLG.

Residues Met-1–Thr-55 are disordered. The segment covering Arg-41–Pro-53 has biased composition (basic residues). Residues Pro-53 to Gly-150 form an H3-like region.

The protein belongs to the histone H3 family. As to quaternary structure, component of centromeric nucleosomes, where DNA is wrapped around a histone octamer core. The octamer contains two molecules each of H2A, H2B, CENPA and H4 assembled in one CENPA-H4 heterotetramer and two H2A-H2B heterodimers. CENPA modulates the DNA-binding characteristics of nucleosomes so that protruding DNA ends have higher flexibility than in nucleosomes containing conventional histone H3.

It is found in the nucleus. The protein resides in the chromosome. It localises to the centromere. Histone H3-like nucleosomal protein that is specifically found in centromeric nucleosomes. Replaces conventional H3 in the nucleosome core of centromeric chromatin that serves as an assembly site for the inner kinetochore. The presence of CENPA subtly modifies the nucleosome structure and the way DNA is wrapped around the nucleosome and gives rise to protruding DNA ends that are less well-ordered and rigid compared to nucleosomes containing histone H3. May serve as an epigenetic mark that propagates centromere identity through replication and cell division. Required for recruitment and assembly of kinetochore proteins, and as a consequence required for progress through mitosis, chromosome segregation and cytokinesis. This is Histone H3-like centromeric protein A (cenpa) from Xenopus laevis (African clawed frog).